A 783-amino-acid polypeptide reads, in one-letter code: Lon protease (783 aa).

Positions 16-210 (LPLLASRGVV…KLLEIIKDEI (195 aa)) constitute a Lon N-terminal domain. 361 to 368 (GAPGVGKT) serves as a coordination point for ATP. One can recognise a Lon proteolytic domain in the interval 597 to 778 (KDRVGVATGM…DQVLDLILGG (182 aa)). Residues Ser-684 and Lys-727 contribute to the active site.

This sequence belongs to the peptidase S16 family. Homohexamer. Organized in a ring with a central cavity.

It is found in the cytoplasm. It catalyses the reaction Hydrolysis of proteins in presence of ATP.. ATP-dependent serine protease that mediates the selective degradation of mutant and abnormal proteins as well as certain short-lived regulatory proteins. Required for cellular homeostasis and for survival from DNA damage and developmental changes induced by stress. Degrades polypeptides processively to yield small peptide fragments that are 5 to 10 amino acids long. Binds to DNA in a double-stranded, site-specific manner. The polypeptide is Lon protease (Halothermothrix orenii (strain H 168 / OCM 544 / DSM 9562)).